Consider the following 482-residue polypeptide: UDP-N-acetylmuramoyl-L-alanyl-D-glutamate--2,6-diaminopimelate ligase (482 aa).

UDP-N-acetyl-alpha-D-muramoyl-L-alanyl-D-glutamate contacts are provided by L28 and S30. Residue 108 to 114 (GTNGKTT) coordinates ATP. UDP-N-acetyl-alpha-D-muramoyl-L-alanyl-D-glutamate is bound by residues 150-151 (TT), S177, Q183, and R185. An N6-carboxylysine modification is found at K217. Meso-2,6-diaminopimelate contacts are provided by residues R372, 396-399 (DNPR), G447, and E451. The Meso-diaminopimelate recognition motif motif lies at 396–399 (DNPR).

This sequence belongs to the MurCDEF family. MurE subfamily. Mg(2+) serves as cofactor. Post-translationally, carboxylation is probably crucial for Mg(2+) binding and, consequently, for the gamma-phosphate positioning of ATP.

It is found in the cytoplasm. The enzyme catalyses UDP-N-acetyl-alpha-D-muramoyl-L-alanyl-D-glutamate + meso-2,6-diaminopimelate + ATP = UDP-N-acetyl-alpha-D-muramoyl-L-alanyl-gamma-D-glutamyl-meso-2,6-diaminopimelate + ADP + phosphate + H(+). It functions in the pathway cell wall biogenesis; peptidoglycan biosynthesis. In terms of biological role, catalyzes the addition of meso-diaminopimelic acid to the nucleotide precursor UDP-N-acetylmuramoyl-L-alanyl-D-glutamate (UMAG) in the biosynthesis of bacterial cell-wall peptidoglycan. The protein is UDP-N-acetylmuramoyl-L-alanyl-D-glutamate--2,6-diaminopimelate ligase of Aquifex aeolicus (strain VF5).